The following is a 157-amino-acid chain: Protein-export protein SecB (157 aa).

It belongs to the SecB family. As to quaternary structure, homotetramer, a dimer of dimers. One homotetramer interacts with 1 SecA dimer.

The protein localises to the cytoplasm. In terms of biological role, one of the proteins required for the normal export of preproteins out of the cell cytoplasm. It is a molecular chaperone that binds to a subset of precursor proteins, maintaining them in a translocation-competent state. It also specifically binds to its receptor SecA. This is Protein-export protein SecB from Magnetococcus marinus (strain ATCC BAA-1437 / JCM 17883 / MC-1).